A 550-amino-acid chain; its full sequence is Atherin (550 aa).

Residues 1–11 (MAGPPALPPPE) are compositionally biased toward pro residues. Disordered stretches follow at residues 1 to 32 (MAGP…SPHY) and 93 to 468 (SYRN…KEKP). Positions 12 to 30 (TAAAATTAAAAASSSAASP) are enriched in low complexity. The 77-residue stretch at 24-100 (SSSAASPHYQ…SISYRNAARV (77 aa)) folds into the SAMD1-like winged helix (WH) domain. Thr108 is modified (phosphothreonine). Pro residues predominate over residues 125-138 (APPPTPAPPPPPAP). A compositionally biased stretch (low complexity) spans 139–160 (VAAAAAPARAPRAAAAAAAATA). A Phosphoserine modification is found at Ser163. Over residues 170–179 (GPRAQRAAPL) the composition is skewed to low complexity. Composition is skewed to pro residues over residues 180–205 (AAPP…PPPA) and 214–245 (PLPP…PPPE). Residues 246–257 (GGAARAGGPARP) are compositionally biased toward low complexity. Ser270 carries the phosphoserine modification. A compositionally biased stretch (basic and acidic residues) spans 290–300 (AAARGRLERTR). The segment covering 337–355 (KEEEEEEEEDDEDDDDDVV) has biased composition (acidic residues). Residues 437–448 (SPSPVPLPPGKP) show a composition bias toward pro residues. One can recognise an SAM domain in the interval 474–542 (WTVMDVVEYF…KVLQQGHFED (69 aa)).

Homopolymerize into a closed pentameric ring. Interacts (via SAM domain) with L3MBTL3 (via SAM domain); the interaction mediates L3MBTL3 binding to chromatin. Interacts (via WH domain) with KDM1A; the interaction modulates KDM1A function.

Its subcellular location is the nucleus. The protein localises to the chromosome. The protein resides in the secreted. Unmethylated CpG islands (CGIs)-binding protein which localizes to H3K4me3-decorated CGIs, where it acts as a transcriptional repressor. Tethers L3MBTL3 to chromatin and interacts with the KDM1A histone demethylase complex to modulate H3K4me2 and H3K4me3 levels at CGIs. Plays a role in atherogenesis by binding with LDL on cell surface and promoting LDL oxidation which leads to the formation of foam cell. This chain is Atherin (SAMD1), found in Oryctolagus cuniculus (Rabbit).